The following is a 1135-amino-acid chain: Exportin-5 (1135 aa).

Positions 32–117 (SQVFLEEIKT…KEKLVTILVD (86 aa)) constitute an Importin N-terminal domain. The tract at residues 630-631 (TE) is pre-siRNA binding.

It belongs to the exportin family. Found in a nuclear export complex with RanGTP, exportin and pre-miRNA.

It localises to the nucleus. The protein resides in the cytoplasm. Its function is as follows. Mediates the nuclear export of proteins bearing a double-stranded RNA binding domain (dsRBD) and double-stranded RNAs (cargos). Mediates the nuclear export of micro-RNA precursors, which form short hairpins. The sequence is that of Exportin-5 (xpo5) from Dictyostelium discoideum (Social amoeba).